The chain runs to 167 residues: Large ribosomal subunit protein uL10 (167 aa).

It belongs to the universal ribosomal protein uL10 family. In terms of assembly, part of the ribosomal stalk of the 50S ribosomal subunit. The N-terminus interacts with L11 and the large rRNA to form the base of the stalk. The C-terminus forms an elongated spine to which L12 dimers bind in a sequential fashion forming a multimeric L10(L12)X complex.

Its function is as follows. Forms part of the ribosomal stalk, playing a central role in the interaction of the ribosome with GTP-bound translation factors. The polypeptide is Large ribosomal subunit protein uL10 (Erwinia tasmaniensis (strain DSM 17950 / CFBP 7177 / CIP 109463 / NCPPB 4357 / Et1/99)).